The chain runs to 164 residues: uncharacterized protein (164 aa).

Residues 1-77 (MGQKKTMGTE…PCSIRDAPFH (77 aa)) are disordered.

This is an uncharacterized protein from Homo sapiens (Human).